We begin with the raw amino-acid sequence, 160 residues long: MHYFFIIVIWLLSINTAWADCWLQAEKMFNIESELLYAIAQQESAMKPGAIGHNRDGSTDLGLMQINSFHMKRLKKMGISEKQLLQDPCISVIVGASILSDMMKIYGFSWEAVGAYNAGTSPKRSDIRKRYAKKIWENYRKLKEMSAEEKNKRLSIAVNK.

The N-terminal stretch at 1–19 (MHYFFIIVIWLLSINTAWA) is a signal peptide.

The protein belongs to the IagB/IpgF/P19 family.

The sequence is that of Invasion protein IagB (iagB) from Salmonella typhi.